We begin with the raw amino-acid sequence, 270 residues long: UPF0162 protein PA3419 (270 aa).

The protein belongs to the UPF0162 family.

The protein is UPF0162 protein PA3419 of Pseudomonas aeruginosa (strain ATCC 15692 / DSM 22644 / CIP 104116 / JCM 14847 / LMG 12228 / 1C / PRS 101 / PAO1).